The following is a 106-amino-acid chain: Transcriptional and immune response regulator (106 aa).

In terms of assembly, monomer. Interacts with NOTCH2 (via ANK repeats), the interaction inhibits the nuclear translocation of NOTCH2 N2ICD. Interacts (C-terminus) with CBY1 (C-terminus), TCIM competes with CTNNB1 for the interaction with CBY1. In terms of tissue distribution, expressed in liver, expression levels decrease in regenerating liver. In bone marrow, expressed in large progenitor-like cells, cells with ring-shaped nuclei and, at lower, levels in hematopietic stem cell-like cells with round nuclei (at protein level).

It is found in the cytoplasm. Its subcellular location is the nucleus. The protein resides in the nucleolus. It localises to the nucleus speckle. In terms of biological role, seems to be involved in the regulation of cell growth an differentiation, may play different and opposite roles depending on the tissue or cell type. May enhance the WNT-CTNNB1 pathway by relieving antagonistic activity of CBY1. Enhances the proliferation of follicular dendritic cells. Plays a role in the mitogen-activated MAPK2/3 signaling pathway, positively regulates G1-to-S-phase transition of the cell cycle. In endothelial cells, enhances key inflammatory mediators and inflammatory response through the modulation of NF-kappaB transcriptional regulatory activity. Involved in the regulation of heat shock response, seems to play a positive feedback with HSF1 to modulate heat-shock downstream gene expression. Plays a role in the regulation of hematopoiesis even if the mechanisms are unknown. In cancers such as thyroid or lung cancer, it has been described as promoter of cell proliferation, G1-to-S-phase transition and inhibitor of apoptosis. However, it negatively regulates self-renewal of liver cancer cells via suppresion of NOTCH2 signaling. This Mus musculus (Mouse) protein is Transcriptional and immune response regulator.